We begin with the raw amino-acid sequence, 327 residues long: Transaldolase (327 aa).

Residue Lys132 is the Schiff-base intermediate with substrate of the active site.

Belongs to the transaldolase family. Type 1 subfamily.

The protein localises to the cytoplasm. The catalysed reaction is D-sedoheptulose 7-phosphate + D-glyceraldehyde 3-phosphate = D-erythrose 4-phosphate + beta-D-fructose 6-phosphate. It participates in carbohydrate degradation; pentose phosphate pathway; D-glyceraldehyde 3-phosphate and beta-D-fructose 6-phosphate from D-ribose 5-phosphate and D-xylulose 5-phosphate (non-oxidative stage): step 2/3. Its function is as follows. Transaldolase is important for the balance of metabolites in the pentose-phosphate pathway. In Chlamydia pneumoniae (Chlamydophila pneumoniae), this protein is Transaldolase.